Reading from the N-terminus, the 573-residue chain is Protein phosphatase EYA3 (573 aa).

Methionine 1 is modified (N-acetylmethionine). Disordered regions lie at residues methionine 1 to asparagine 46 and threonine 236 to serine 296. The span at serine 20–asparagine 46 shows a compositional bias: polar residues. A compositionally biased stretch (low complexity) spans leucine 254–serine 271. Phosphoserine occurs at positions 262 and 266. Aspartate 309 (nucleophile) is an active-site residue. Mg(2+)-binding residues include aspartate 309 and aspartate 311. Catalysis depends on aspartate 311, which acts as the Proton donor. Phosphoserine is present on residues serine 438 and serine 472. Position 537 (aspartate 537) interacts with Mg(2+).

It belongs to the HAD-like hydrolase superfamily. EYA family. In terms of assembly, interacts with SIX1 and DACH1, and probably SIX2, SIX4, SIX5. Requires Mg(2+) as cofactor. In terms of processing, ser-266 phosphorylation is required for localization at sites of DNA damage and directing interaction with H2AX.

The protein localises to the cytoplasm. The protein resides in the nucleus. The enzyme catalyses O-phospho-L-tyrosyl-[protein] + H2O = L-tyrosyl-[protein] + phosphate. In terms of biological role, tyrosine phosphatase that specifically dephosphorylates 'Tyr-142' of histone H2AX (H2AXY142ph). 'Tyr-142' phosphorylation of histone H2AX plays a central role in DNA repair and acts as a mark that distinguishes between apoptotic and repair responses to genotoxic stress. Promotes efficient DNA repair by dephosphorylating H2AX, promoting the recruitment of DNA repair complexes containing MDC1. Its function as histone phosphatase probably explains its role in transcription regulation during organogenesis. Coactivates SIX1, and seems to coactivate SIX2, SIX4 and SIX5. The repression of precursor cell proliferation in myoblasts by SIX1 is switched to activation through recruitment of EYA3 to the SIX1-DACH1 complex and seems to be dependent on EYA3 phosphatase activity. May be involved in development of the eye. The chain is Protein phosphatase EYA3 (EYA3) from Homo sapiens (Human).